The chain runs to 289 residues: Rhodopsin (289 aa).

Residues 1 to 7 (YLVNPAA) are Extracellular-facing. Residues 8–32 (YAAPGAYMFLLILVGFPVNFLTLYV) form a helical membrane-spanning segment. At 33–44 (TLEHKKLRTPLN) the chain is on the cytoplasmic side. The chain crosses the membrane as a helical span at residues 45–67 (YILLNLAVADLFMVLGGFTTTMY). Residues 68–81 (TSMHGYFVLGRLGC) lie on the Extracellular side of the membrane. A disulfide bond links C81 and C158. A helical transmembrane segment spans residues 82-104 (NLEGFFATLGGEIALWSLVVLAI). Positions 105 to 107 (ERW) match the 'Ionic lock' involved in activated form stabilization motif. The Cytoplasmic portion of the chain corresponds to 105-123 (ERWIVVCKPISNFRFTEDH). The chain crosses the membrane as a helical span at residues 124–144 (AIMGLAFSWVMALTCAVPPLV). Residues 145-173 (GWSRYIPEGMQCSCGVDYYTRAEGFNNES) lie on the Extracellular side of the membrane. N171 is a glycosylation site (N-linked (GlcNAc...) asparagine). The chain crosses the membrane as a helical span at residues 174-195 (FVIYMFIVHFLIPLSNNFFCYG). Topologically, residues 196 to 223 (RLLCAVKEAAAAQQESETTQRAEREVSR) are cytoplasmic. The helical transmembrane segment at 224–245 (MVVMMVVSFLMCWLPYASVAWY) threads the bilayer. Over 246–257 (IFCNQGSEFGPI) the chain is Extracellular. The chain crosses the membrane as a helical span at residues 258-279 (FMTLPAFFAKSSAIYNPLIYIC). An N6-(retinylidene)lysine modification is found at K267. The Cytoplasmic segment spans residues 280–289 (MNKHVRHCMI).

The protein belongs to the G-protein coupled receptor 1 family. Opsin subfamily. Post-translationally, phosphorylated on some or all of the serine and threonine residues present in the C-terminal region. Contains one covalently linked retinal chromophore.

It localises to the membrane. Its subcellular location is the cell projection. It is found in the cilium. The protein resides in the photoreceptor outer segment. Its function is as follows. Photoreceptor required for image-forming vision at low light intensity. While most salt water fish species use retinal as chromophore, most freshwater fish use 3-dehydroretinal, or a mixture of retinal and 3-dehydroretinal. Light-induced isomerization of 11-cis to all-trans retinal triggers a conformational change that activates signaling via G-proteins. Subsequent receptor phosphorylation mediates displacement of the bound G-protein alpha subunit by arrestin and terminates signaling. This is Rhodopsin (rho) from Cottocomephorus grewingkii (Baikal yellowfin).